A 425-amino-acid chain; its full sequence is MEPSATPGPQMGVPTEGRERSPEPPDYEDEFLRYLWRDYLYPKQYEWVLIAAYVAVFFVALVGNTLVCLAVWRNHHMRTVTNYFIVNLSLADVLVTAICLPASLLVDITESWLFGHALCKVIPYLQAVSVSVAVLTLSFIALDRWYAICHPLLFKSTARRARGSILGIWAVSLAVMVPQAAVMECSSVLPELANRTRLFSVCDERWADDLYPKIYHSCFFIVTYLAPLGLMAMAYFQIFRKLWGRQIPGTTSALVRNWKRPSVQLEEQGQGLGAEPQPRARAFLAEVKQMRARRKTAKMLMVVLLVFALCYLPISVLNVLKRVFGMFRQASDREAVYACFTFSHWLVYANSAANPIIYNFLSGKFREQFKAAFSCCLPGLGPCVSLKVPSPRSSASHKSLSLQSRCSVSKASEHVLLTSVTTVLP.

Positions 1-25 are disordered; it reads MEPSATPGPQMGVPTEGRERSPEPP. The Extracellular portion of the chain corresponds to 1–46; that stretch reads MEPSATPGPQMGVPTEGRERSPEPPDYEDEFLRYLWRDYLYPKQYE. Residues 26–41 form a required for response to orexin-A region; the sequence is DYEDEFLRYLWRDYLY. A helical membrane pass occupies residues 47 to 67; sequence WVLIAAYVAVFFVALVGNTLV. The Cytoplasmic segment spans residues 68–82; the sequence is CLAVWRNHHMRTVTN. A helical membrane pass occupies residues 83–105; the sequence is YFIVNLSLADVLVTAICLPASLL. Topologically, residues 106–119 are extracellular; it reads VDITESWLFGHALC. Cys119 and Cys202 are disulfide-bonded. A helical membrane pass occupies residues 120 to 140; that stretch reads KVIPYLQAVSVSVAVLTLSFI. The Cytoplasmic portion of the chain corresponds to 141–160; that stretch reads ALDRWYAICHPLLFKSTARR. The helical transmembrane segment at 161–182 threads the bilayer; it reads ARGSILGIWAVSLAVMVPQAAV. The Extracellular segment spans residues 183 to 213; that stretch reads MECSSVLPELANRTRLFSVCDERWADDLYPK. Asn194 carries an N-linked (GlcNAc...) asparagine glycan. The helical transmembrane segment at 214-235 threads the bilayer; sequence IYHSCFFIVTYLAPLGLMAMAY. Residues 236–298 lie on the Cytoplasmic side of the membrane; sequence FQIFRKLWGR…QMRARRKTAK (63 aa). A helical membrane pass occupies residues 299–321; the sequence is MLMVVLLVFALCYLPISVLNVLK. Residues 322 to 336 lie on the Extracellular side of the membrane; the sequence is RVFGMFRQASDREAV. The helical transmembrane segment at 337 to 360 threads the bilayer; the sequence is YACFTFSHWLVYANSAANPIIYNF. Over 361–425 the chain is Cytoplasmic; sequence LSGKFREQFK…LLTSVTTVLP (65 aa).

This sequence belongs to the G-protein coupled receptor 1 family.

Its subcellular location is the cell membrane. Moderately selective excitatory receptor for orexin-A and, with a lower affinity, for orexin-B neuropeptide. Triggers an increase in cytoplasmic Ca(2+) levels in response to orexin-A binding. This chain is Orexin/Hypocretin receptor type 1, found in Bos taurus (Bovine).